The primary structure comprises 158 residues: Endoribonuclease YbeY (158 aa).

Residues His117, His121, and His127 each contribute to the Zn(2+) site.

This sequence belongs to the endoribonuclease YbeY family. It depends on Zn(2+) as a cofactor.

The protein resides in the cytoplasm. In terms of biological role, single strand-specific metallo-endoribonuclease involved in late-stage 70S ribosome quality control and in maturation of the 3' terminus of the 16S rRNA. In Buchnera aphidicola subsp. Schizaphis graminum (strain Sg), this protein is Endoribonuclease YbeY.